The following is a 381-amino-acid chain: MADYYETLGVERGASDDEIKKAYRKLSRKYHPDIAGPEFEDKFKEVNNAYDVLSNPDKRRMYDSGVDPNNPNAGAGGFSGAGFGDMSDVFSTFFGSAFGGGSQGPVPRTQPGRDALASASIDLKTAVFGGTAHVKINTFSLCQECGGSGAQGGAQPVTCPDCHGQGFMQKVVRTMLGQMMTSAPCERCEGHGTIIQNPCPSCMGHGRVRTTRTVGVTVPAGINDNARLRLANQGEVGEGGGAAGDLYIDIRIKADKQFTRDGDDLHCWIQVPMSWAVLGHDLSIDTFDGEKTVSIPAGCQTEDTVTLKGLGVTNIRNKDERGNLIAHVNVLIPTKLNETERGLIEQFAASHDSGATHVSQASRPQAGQKKGFFSKLKDALS.

Residues 3 to 66 (DYYETLGVER…DKRRMYDSGV (64 aa)) form the J domain. A CR-type zinc finger spans residues 129-211 (GGTAHVKINT…CMGHGRVRTT (83 aa)). 8 residues coordinate Zn(2+): cysteine 142, cysteine 145, cysteine 159, cysteine 162, cysteine 185, cysteine 188, cysteine 199, and cysteine 202. CXXCXGXG motif repeat units follow at residues 142–149 (CQECGGSG), 159–166 (CPDCHGQG), 185–192 (CERCEGHG), and 199–206 (CPSCMGHG). Positions 355–381 (ATHVSQASRPQAGQKKGFFSKLKDALS) are disordered. Residues 356–365 (THVSQASRPQ) show a composition bias toward polar residues.

Belongs to the DnaJ family. As to quaternary structure, homodimer. The cofactor is Zn(2+).

It is found in the cytoplasm. Functionally, participates actively in the response to hyperosmotic and heat shock by preventing the aggregation of stress-denatured proteins and by disaggregating proteins, also in an autonomous, DnaK-independent fashion. Unfolded proteins bind initially to DnaJ; upon interaction with the DnaJ-bound protein, DnaK hydrolyzes its bound ATP, resulting in the formation of a stable complex. GrpE releases ADP from DnaK; ATP binding to DnaK triggers the release of the substrate protein, thus completing the reaction cycle. Several rounds of ATP-dependent interactions between DnaJ, DnaK and GrpE are required for fully efficient folding. Also involved, together with DnaK and GrpE, in the DNA replication of plasmids through activation of initiation proteins. The protein is Chaperone protein DnaJ of Bifidobacterium longum (strain NCC 2705).